Consider the following 930-residue polypeptide: Translation initiation factor IF-2 (930 aa).

Residues 27–342 (LGLDVKSHSS…APKPVTERKF (316 aa)) are disordered. Positions 52–103 (KAAAPQAPAEKPVAAQPSPQKTPAKEAAPVKAEPTEAKAAAQPEAKTETAAP) are enriched in low complexity. Composition is skewed to basic and acidic residues over residues 112 to 128 (FKAE…ERRK) and 136 to 178 (QNKE…DGRR). The span at 183–195 (HQGFNGQKRQQPQ) shows a compositional bias: polar residues. A compositionally biased stretch (basic and acidic residues) spans 218–245 (RSSEERFKQAQEAKEVMERQNRRKEQPK). A compositionally biased stretch (pro residues) spans 251–268 (PVQPAPAPSAPAANPSPA). The span at 280–297 (ARPDKKRDDFDREEEGPR) shows a compositional bias: basic and acidic residues. Positions 302 to 318 (NRSSQNQVRNQRNSNWN) are enriched in low complexity. One can recognise a tr-type G domain in the interval 432–599 (ERPPVVTIMG…TVLLVAEIQE (168 aa)). Residues 441–448 (GHVDHGKT) form a G1 region. 441–448 (GHVDHGKT) serves as a coordination point for GTP. The G2 stretch occupies residues 466-470 (GITQH). A G3 region spans residues 487 to 490 (DTPG). GTP is bound by residues 487-491 (DTPGH) and 541-544 (NKID). Positions 541-544 (NKID) are G4. The interval 577–579 (SAK) is G5.

It belongs to the TRAFAC class translation factor GTPase superfamily. Classic translation factor GTPase family. IF-2 subfamily.

It localises to the cytoplasm. Functionally, one of the essential components for the initiation of protein synthesis. Protects formylmethionyl-tRNA from spontaneous hydrolysis and promotes its binding to the 30S ribosomal subunits. Also involved in the hydrolysis of GTP during the formation of the 70S ribosomal complex. The chain is Translation initiation factor IF-2 from Streptococcus sanguinis (strain SK36).